Here is a 128-residue protein sequence, read N- to C-terminus: MATITREEIKEAIKSMTVLELAQLVKDLEEEFGVSAAAMVAAAPAAGGAAGAAAPAEEKTEFDVILTNAGANKINVIKVVREITGLGLKEAKDLVDGAPKPVKEGVSKDEAEQIKKKLEEAGATVEVK.

This sequence belongs to the bacterial ribosomal protein bL12 family. In terms of assembly, homodimer. Part of the ribosomal stalk of the 50S ribosomal subunit. Forms a multimeric L10(L12)X complex, where L10 forms an elongated spine to which 2 to 4 L12 dimers bind in a sequential fashion. Binds GTP-bound translation factors.

Functionally, forms part of the ribosomal stalk which helps the ribosome interact with GTP-bound translation factors. Is thus essential for accurate translation. The sequence is that of Large ribosomal subunit protein bL12 from Sulfurihydrogenibium sp. (strain YO3AOP1).